We begin with the raw amino-acid sequence, 202 residues long: Transmembrane 4 L6 family member 1 (202 aa).

Topologically, residues 1–9 (MCYGKCARC) are cytoplasmic. Residues 10-30 (IGHSLVGLALLCIAANILLYF) form a helical membrane-spanning segment. The Extracellular segment spans residues 31-49 (PNGETKYASENHLSRFVWF). A helical transmembrane segment spans residues 50-70 (FSGIVGGGLLMLLPAFVFIGL). Topologically, residues 71–93 (EQDDCCGCCGHENCGKRCAMLSS) are cytoplasmic. The chain crosses the membrane as a helical span at residues 94–114 (VLAALIGIAGSGYCVIVAALG). The Extracellular portion of the chain corresponds to 115–161 (LAEGPLCLDSLGQWNYTFASTEGQYLLDTSTWSECTEPKHIVEWNVS). N-linked (GlcNAc...) asparagine glycosylation is found at Asn-129 and Asn-159. A helical transmembrane segment spans residues 162 to 182 (LFSILLALGGIEFILCLIQVI). The Cytoplasmic portion of the chain corresponds to 183–202 (NGVLGGICGFCCSHQQQYDC).

Belongs to the L6 tetraspanin family. In terms of assembly, present in high molecular weight complexes in tumor cells. Interacts with SDCBP2. Highly expressed in lung, breast, colon and ovarian carcinomas. It is also present on some normal cells, endothelial cells in particular.

The protein resides in the membrane. This Homo sapiens (Human) protein is Transmembrane 4 L6 family member 1 (TM4SF1).